A 189-amino-acid polypeptide reads, in one-letter code: Interferon alpha-H (189 aa).

An N-terminal signal peptide occupies residues 1–23; sequence MAPAWSFLLALLLLSCNAICSLG. 2 disulfide bridges follow: cysteine 24–cysteine 122 and cysteine 52–cysteine 162.

Belongs to the alpha/beta interferon family.

It is found in the secreted. Functionally, produced by macrophages, IFN-alpha have antiviral activities. Interferon stimulates the production of two enzymes: a protein kinase and an oligoadenylate synthetase. This Bos taurus (Bovine) protein is Interferon alpha-H (IFNAH).